Reading from the N-terminus, the 304-residue chain is Homoserine kinase (304 aa).

An ATP-binding site is contributed by 86–96 (PLARGLGSSAA).

This sequence belongs to the GHMP kinase family. Homoserine kinase subfamily.

It localises to the cytoplasm. It carries out the reaction L-homoserine + ATP = O-phospho-L-homoserine + ADP + H(+). The protein operates within amino-acid biosynthesis; L-threonine biosynthesis; L-threonine from L-aspartate: step 4/5. Catalyzes the ATP-dependent phosphorylation of L-homoserine to L-homoserine phosphate. This is Homoserine kinase from Carboxydothermus hydrogenoformans (strain ATCC BAA-161 / DSM 6008 / Z-2901).